A 469-amino-acid chain; its full sequence is Dynein axonemal assembly factor 11 (469 aa).

LRR repeat units lie at residues 20-43 (IFSLEEISLHQQDLERIEHIDKWC), 44-65 (RELKILYLQNNLIGKIENVSKL), 66-89 (KKLEYLNLALNNIEKIENLEGCES), and 90-110 (LQKLDLTVNFVGELSSINSLQ). Residues 114–135 (HLRELYLVGNPCAEYEGYRQYV) enclose the LRRCT domain. 2 stretches are compositionally biased toward basic and acidic residues: residues 179–213 (KRAAEREEARSKLQGKQKESRKTQEKKPGFDRRWY) and 261–286 (SRLETHRYLEEKRKSKESSSEGELKK). Disordered regions lie at residues 179–290 (KRAA…KPPR) and 436–469 (KTQAQGPLQFHKNKVKDTEDSEDFIDNTDVPPLM).

The protein belongs to the tilB family.

Its subcellular location is the cytoplasm. The protein resides in the cell projection. It is found in the cilium. It localises to the dynein axonemal particle. The protein localises to the flagellum. Its function is as follows. Involved in dynein arm assembly, is important for expression and transporting outer dynein arm (ODA) proteins from the cytoplasm to the cilia. In Xenopus laevis (African clawed frog), this protein is Dynein axonemal assembly factor 11 (dnaaf11).